A 330-amino-acid chain; its full sequence is Low-redox potential peroxidase (330 aa).

An N-terminal signal peptide occupies residues 1–24 (MRSSTHIFVSFVVYCGVFVTSAIA). N-linked (GlcNAc...) asparagine glycosylation is present at Asn27. 3 disulfide bridges follow: Cys34/Cys285, Cys54/Cys123, and Cys251/Cys314. Residues Gly69, Asp71, and Ser73 each coordinate Ca(2+). Residue His178 participates in heme b binding. Ser179, Asp196, Thr198, and Asp203 together coordinate Ca(2+).

It belongs to the peroxidase family. Ligninase subfamily. Requires Ca(2+) as cofactor. Heme b serves as cofactor.

Its subcellular location is the secreted. The catalysed reaction is 2 a phenolic donor + H2O2 = 2 a phenolic radical donor + 2 H2O. Functionally, can oxidize the lignin redox mediator veratryl alcohol to veratryl aldehyde. May be involved in oxidation of lignocellulose substrates. This Taiwanofungus camphoratus (Poroid brown-rot fungus) protein is Low-redox potential peroxidase (LnP).